The chain runs to 337 residues: Receptor like protein kinase S.3 (337 aa).

A Protein kinase domain is found at Phe50–Leu316. ATP-binding positions include Phe56–Val64 and Lys78. A Phosphotyrosine modification is found at Tyr123. The active-site Proton acceptor is Asp171.

Belongs to the protein kinase superfamily. Ser/Thr protein kinase family.

It carries out the reaction L-seryl-[protein] + ATP = O-phospho-L-seryl-[protein] + ADP + H(+). The enzyme catalyses L-threonyl-[protein] + ATP = O-phospho-L-threonyl-[protein] + ADP + H(+). This Arabidopsis thaliana (Mouse-ear cress) protein is Receptor like protein kinase S.3 (LECRKS3).